The chain runs to 474 residues: Homeobox protein PKNOX2 (474 aa).

The tract at residues 1-42 (MMQHASPAPALTMMATQNVPPPPYQDSPQMTATAQPPSKAQA) is disordered. Over residues 26–38 (DSPQMTATAQPPS) the composition is skewed to polar residues. Residues 96–179 (GSECITSASF…MHSDNLLRND (84 aa)) form the MEIS N-terminal domain. Positions 291-350 (KRGVLPKHATNIMRSWLFQHLMHPYPTEDEKRQIAAQTNLTLLQVNNWFINARRRILQPM) form a DNA-binding region, homeobox. Disordered regions lie at residues 351–371 (LDASNPDPAPKAKKIKSQHRP), 385–405 (LQQQGGTPGTNPDGSINLDNL), and 423–474 (AAHD…DSLE). Over residues 361–371 (KAKKIKSQHRP) the composition is skewed to basic residues. The segment covering 429 to 456 (LDGTEEEDEDDMEEEEEEEEELEEEADE) has biased composition (acidic residues).

It belongs to the TALE/MEIS homeobox family.

The protein resides in the nucleus. The chain is Homeobox protein PKNOX2 (Pknox2) from Mus musculus (Mouse).